The primary structure comprises 484 residues: Sushi domain-containing protein 4 (484 aa).

The first 35 residues, 1–35 (MFHHADKGGKKSAFGHPVCGQIILSIILLRPPLLV), serve as a signal peptide directing secretion. 4 Sushi domains span residues 46-110 (QICK…VCLS), 111-168 (EDCL…QPTC), 169-230 (QGCL…RCLD), and 232-295 (EACS…YCVK). 8 cysteine pairs are disulfide-bonded: cysteine 48/cysteine 90, cysteine 76/cysteine 108, cysteine 113/cysteine 156, cysteine 138/cysteine 168, cysteine 171/cysteine 215, cysteine 201/cysteine 228, cysteine 234/cysteine 280, and cysteine 265/cysteine 293. Asparagine 95 and asparagine 125 each carry an N-linked (GlcNAc...) asparagine glycan. N-linked (GlcNAc...) asparagine glycosylation occurs at asparagine 183. The chain crosses the membrane as a helical span at residues 311–331 (WKVVACTATSVLLALLLVITA). The tract at residues 374 to 484 (SGNYCQPPND…PLVEDGEEDC (111 aa)) is disordered. 2 stretches are compositionally biased toward polar residues: residues 424-442 (DSLS…SSSH) and 449-467 (SEKT…TSPS). Residues 470-484 (IADEIPLVEDGEEDC) show a composition bias toward acidic residues.

It is found in the membrane. The chain is Sushi domain-containing protein 4 (susd4) from Danio rerio (Zebrafish).